The following is a 488-amino-acid chain: Transcriptional coactivator YAP1 (488 aa).

Positions 1–21 (MEPAQQPPPQPAPQGPAPPSV) are enriched in pro residues. A disordered region spans residues 1–47 (MEPAQQPPPQPAPQGPAPPSVSPAGTPAAPPAPPAGHQVVHVRGDSE). Ser46 is subject to Phosphoserine. Thr48 bears the Phosphothreonine mark. Residues 71–85 (MRLRKLPDSFFKPPE) adopt a coiled-coil conformation. An N6-lactoyllysine modification is found at Lys75. Positions 76 to 99 (LPDSFFKPPEPKSHSRQASTDAGT) are disordered. 2 positions are modified to phosphoserine: Ser90 and Ser94. The residue at position 95 (Thr95) is a Phosphothreonine. Residue Thr104 is modified to Phosphothreonine; by MAPK8 and MAPK9. A phosphoserine mark is found at Ser112, Ser113, Ser116, and Ser123. Ser149 is subject to Phosphoserine; by LATS1 and LATS2. 2 WW domains span residues 156–189 (VPLP…DPRK) and 215–248 (GPLP…DPRL). 2 disordered regions span residues 261–293 (SAPV…QIQL) and 339–393 (TLEQ…SSYS). Ser274 bears the Phosphoserine mark. A transactivation domain region spans residues 276–488 (QGGVLGGGSS…LDKESFLTWL (213 aa)). The stretch at 283 to 344 (GSSNQQQQIQ…SQLPTLEQDG (62 aa)) forms a coiled coil. Residues 348–376 (NAVSSPGMSQELRTMTTNSSDPFLNSGTY) show a composition bias toward polar residues. Position 352 is a phosphoserine; by MAPK8 and MAPK9 (Ser352). Ser356, Ser366, Ser367, and Ser373 each carry phosphoserine. The residue at position 382 (Ser382) is a Phosphoserine; by LATS1 and LATS2. Over residues 384 to 393 (DSGLSMSSYS) the composition is skewed to polar residues. 2 positions are modified to phosphoserine; by CK1: Ser385 and Ser388. Tyr392 is modified (phosphotyrosine; by ABL1). Thr397 is modified (phosphothreonine; by MAPK8 and MAPK9).

The protein belongs to the YAP1 family. As to quaternary structure, part of a complex when phosphorylated that contains DSG3, PKP1, YAP1 and YWHAG; the complex is required for localization of DSG3 and YAP1 to the cell membrane in keratinocytes. Binds to the SH3 domain of the YES kinase. Binds to WBP1 and WBP2. Binds, in vitro, through the WW1 domain, to neural isoforms of ENAH that contain the PPSY motif. The phosphorylated form interacts with YWHAB. Interacts (via WW domains) with LATS1 (via PPxY motif 2). Interacts with LATS2. Interacts (via WW domain 1) with isoform JM-A of ERBB4 (via PPxY motif 2). Interacts with TEAD1, TEAD2 and TEAD3. Interacts with TP73 and HCK. Interacts with RUNX1. Interacts with TEAD4. Interacts (via WW domains) with PTPN14 (via PPxY motif 2); this interaction leads to the cytoplasmic sequestration of YAP1 and inhibits its transcriptional coactivator activity. Interacts (when phosphorylated at Ser-112) with SMAD2, SMAD3 and WWTR1. Interacts with PRRG2 (via cytoplasmic domain). Interacts (via WW domains) with PRRG4 (via cytoplasmic domain). Interacts (phosphorylated) with CLDN18; the interaction sequesters YAP1 away from the nucleus and thereby restricts transcription of YAP1 target genes. Interacts with SMAD1. Interacts with AMOT; the interaction facilitates translocation of YAP1 to the cytoplasm and tight junctions. Interacts with AMOTL2, the interaction is required for ubiquitination of AMOTL2 and localization of YAP1 to tight junctions. In terms of processing, phosphorylated by LATS1 and LATS2; leading to cytoplasmic translocation and inactivation. Phosphorylated by ABL1; leading to YAP1 stabilization, enhanced interaction with TP73 and recruitment onto proapoptotic genes; in response to DNA damage. Phosphorylation at Ser-385 and Ser-388 by CK1 is triggered by previous phosphorylation at Ser-382 by LATS proteins and leads to YAP1 ubiquitination by SCF(beta-TRCP) E3 ubiquitin ligase and subsequent degradation. Phosphorylated at Thr-104, Ser-123, Ser-352 and Thr-397 by MAPK8/JNK1 and MAPK9/JNK2, which is required for the regulation of apoptosis by YAP1. Lactylation by AARS1 promotes nuclear localization and stabilization of YAP1, leading to increased Hippo signaling pathway. Delactylated by SIRT1. Post-translationally, ubiquitinated by SCF(beta-TRCP) E3 ubiquitin ligase. In terms of tissue distribution, isoforms lacking the transactivation domain seen in striatal neurons (at protein level). Ubiquitous. Isoform 2 is expressed at higher levels in the neural tissues. In the embryo, it is expressed in brain, eye, and the maxillary and frontonasal components of the primary palate.

The protein resides in the cytoplasm. It localises to the nucleus. Its subcellular location is the cell junction. The protein localises to the tight junction. It is found in the cell membrane. Functionally, transcriptional regulator with dual roles as a coactivator and corepressor. Critical downstream regulatory target in the Hippo signaling pathway, crucial for organ size control and tumor suppression by restricting proliferation and promoting apoptosis. The Hippo signaling pathway core involves a kinase cascade featuring STK3/MST2 and STK4/MST1, along with its regulatory partner SAV1, which phosphorylates and activates LATS1/2 in complex with their regulatory protein, MOB1. This activation leads to the phosphorylation and inactivation of the YAP1 oncoprotein and WWTR1/TAZ. Phosphorylation of YAP1 by LATS1/2 prevents its nuclear translocation, thereby regulating the expression of its target genes. The transcriptional regulation of gene expression requires TEAD transcription factors and modulates cell growth, anchorage-independent growth, and induction of epithelial-mesenchymal transition (EMT). Plays a key role in tissue tension and 3D tissue shape by regulating the cortical actomyosin network, acting via ARHGAP18, a Rho GTPase activating protein that suppresses F-actin polymerization. It also suppresses ciliogenesis by acting as a transcriptional corepressor of TEAD4 target genes AURKA and PLK1. In conjunction with WWTR1, regulates TGFB1-dependent SMAD2 and SMAD3 nuclear accumulation. Synergizes with WBP2 to enhance PGR activity. This Mus musculus (Mouse) protein is Transcriptional coactivator YAP1 (Yap1).